Consider the following 848-residue polypeptide: Aryl hydrocarbon receptor (848 aa).

Residues 1 to 9 constitute a propeptide that is removed on maturation; that stretch reads MSSGANITY. Positions 1–38 are disordered; sequence MSSGANITYASRKRRKPVQKTVKPIPAEGIKSNPSKRH. 2 short sequence motifs (nuclear localization signal) span residues 12–15 and 36–41; these read RKRR and KRHRDR. The bHLH domain occupies 26 to 79; the sequence is PAEGIKSNPSKRHRDRLNTELDRLASLLPFPQDVINKLDKLSVLRLSVSYLRAK. The interval 37–65 is DNA-binding; it reads RHRDRLNTELDRLASLLPFPQDVINKLDK. Required for maintaining the overall integrity of the AHR:ARNT heterodimer and its transcriptional activity regions lie at residues 49-81, 116-124, and 260-262; these read LASLLPFPQDVINKLDKLSVLRLSVSYLRAKSF, LLQALNGFV, and FAI. Residues 63–71 carry the Nuclear export signal motif; it reads LDKLSVLRL. Residues 116 to 179 enclose the PAS 1 domain; sequence LLQALNGFVL…RQLHWALNPD (64 aa). Positions 269-336 constitute a PAS 2 domain; it reads PSILEIRTKN…CAESHIRMIK (68 aa). A PAC domain is found at 342–380; that stretch reads MTVFRLFAKHSRWRWVQSNARLIYRNGRPDYIIATQRPL. The interval 421–449 is disordered; that stretch reads LPIRTKSNTSRKDWAPQSTPSKDSFHPSS. Polar residues predominate over residues 436-449; the sequence is PQSTPSKDSFHPSS.

In terms of assembly, homodimer. Heterodimer; efficient DNA binding requires dimerization with another bHLH protein. Interacts with ARNT; the heterodimer ARNT:AHR binds to core DNA sequence 5'-TGCGTG-3' within the dioxin response element (DRE) of target gene promoters and activates their transcription. Binds MYBBP1A. Interacts with coactivators including SRC-1, RIP140 and NOCA7, and with the corepressor SMRT. Interacts with NEDD8 and IVNS1ABP. Interacts with BMAL1. Interacts with HSP90AB1. Interacts with TIPARP; leading to mono-ADP-ribosylation of AHR and subsequent inhibition of AHR. In terms of processing, mono-ADP-ribosylated, leading to inhibit transcription activator activity of AHR. As to expression, expressed in all tissues tested including brain, heart, kidney, liver, lung, muscle, ovary, skin, spleen and thymus.

The protein localises to the cytoplasm. It localises to the nucleus. Ligand-activated transcription factor that enables cells to adapt to changing conditions by sensing compounds from the environment, diet, microbiome and cellular metabolism, and which plays important roles in development, immunity and cancer. Upon ligand binding, translocates into the nucleus, where it heterodimerizes with ARNT and induces transcription by binding to xenobiotic response elements (XRE). Regulates a variety of biological processes, including angiogenesis, hematopoiesis, drug and lipid metabolism, cell motility and immune modulation. Xenobiotics can act as ligands: upon xenobiotic-binding, activates the expression of multiple phase I and II xenobiotic chemical metabolizing enzyme genes (such as the CYP1A1 gene). Mediates biochemical and toxic effects of halogenated aromatic hydrocarbons. Next to xenobiotics, natural ligands derived from plants, microbiota, and endogenous metabolism are potent AHR agonists. Tryptophan (Trp) derivatives constitute an important class of endogenous AHR ligands. Acts as a negative regulator of anti-tumor immunity: indoles and kynurenic acid generated by Trp catabolism act as ligand and activate AHR, thereby promoting AHR-driven cancer cell motility and suppressing adaptive immunity. Regulates the circadian clock by inhibiting the basal and circadian expression of the core circadian component PER1. Inhibits PER1 by repressing the CLOCK-BMAL1 heterodimer mediated transcriptional activation of PER1. The heterodimer ARNT:AHR binds to core DNA sequence 5'-TGCGTG-3' within the dioxin response element (DRE) of target gene promoters and activates their transcription. The protein is Aryl hydrocarbon receptor (Ahr) of Mus musculus (Mouse).